The following is a 348-amino-acid chain: D-erythrose-4-phosphate dehydrogenase (348 aa).

Position 12–13 (12–13) interacts with NAD(+); that stretch reads RI. Substrate contacts are provided by residues 154–156, arginine 200, 213–214, and arginine 236; these read SCT and TR. Residue cysteine 155 is the Nucleophile of the active site. Asparagine 318 is a binding site for NAD(+).

Belongs to the glyceraldehyde-3-phosphate dehydrogenase family. Epd subfamily. In terms of assembly, homotetramer.

It is found in the cytoplasm. It catalyses the reaction D-erythrose 4-phosphate + NAD(+) + H2O = 4-phospho-D-erythronate + NADH + 2 H(+). It functions in the pathway cofactor biosynthesis; pyridoxine 5'-phosphate biosynthesis; pyridoxine 5'-phosphate from D-erythrose 4-phosphate: step 1/5. Functionally, catalyzes the NAD-dependent conversion of D-erythrose 4-phosphate to 4-phosphoerythronate. The chain is D-erythrose-4-phosphate dehydrogenase from Erwinia tasmaniensis (strain DSM 17950 / CFBP 7177 / CIP 109463 / NCPPB 4357 / Et1/99).